Reading from the N-terminus, the 386-residue chain is Bifunctional enzyme IspD/IspF (386 aa).

The 2-C-methyl-D-erythritol 4-phosphate cytidylyltransferase stretch occupies residues 1 to 226; it reads MATPSPLPSF…EDFMADLLPV (226 aa). Positions 227–386 are 2-C-methyl-D-erythritol 2,4-cyclodiphosphate synthase; that stretch reads RVGTGFDVHK…ATVVRKDTPA (160 aa). A divalent metal cation is bound by residues aspartate 233 and histidine 235. Residues 233-235 and 259-260 each bind 4-CDP-2-C-methyl-D-erythritol 2-phosphate; these read DVH and HS. Histidine 267 provides a ligand contact to a divalent metal cation. 4-CDP-2-C-methyl-D-erythritol 2-phosphate is bound by residues 281-283, 357-360, phenylalanine 364, and arginine 367; these read DIG and TTTE.

The protein in the N-terminal section; belongs to the IspD/TarI cytidylyltransferase family. IspD subfamily. This sequence in the C-terminal section; belongs to the IspF family. Requires a divalent metal cation as cofactor.

The catalysed reaction is 2-C-methyl-D-erythritol 4-phosphate + CTP + H(+) = 4-CDP-2-C-methyl-D-erythritol + diphosphate. It carries out the reaction 4-CDP-2-C-methyl-D-erythritol 2-phosphate = 2-C-methyl-D-erythritol 2,4-cyclic diphosphate + CMP. The protein operates within isoprenoid biosynthesis; isopentenyl diphosphate biosynthesis via DXP pathway; isopentenyl diphosphate from 1-deoxy-D-xylulose 5-phosphate: step 2/6. It participates in isoprenoid biosynthesis; isopentenyl diphosphate biosynthesis via DXP pathway; isopentenyl diphosphate from 1-deoxy-D-xylulose 5-phosphate: step 4/6. Bifunctional enzyme that catalyzes the formation of 4-diphosphocytidyl-2-C-methyl-D-erythritol from CTP and 2-C-methyl-D-erythritol 4-phosphate (MEP) (IspD), and catalyzes the conversion of 4-diphosphocytidyl-2-C-methyl-D-erythritol 2-phosphate (CDP-ME2P) to 2-C-methyl-D-erythritol 2,4-cyclodiphosphate (ME-CPP) with a corresponding release of cytidine 5-monophosphate (CMP) (IspF). This Erythrobacter litoralis (strain HTCC2594) protein is Bifunctional enzyme IspD/IspF.